The primary structure comprises 187 residues: Putative glutathione-dependent formaldehyde-activating enzyme (187 aa).

The CENP-V/GFA domain occupies 20-166; the sequence is FPGGKLYCHC…FESVGLKTYD (147 aa). C27, C29, C48, C50, C53, C95, and C98 together coordinate Zn(2+).

It belongs to the Gfa family. Zn(2+) is required as a cofactor.

The catalysed reaction is S-(hydroxymethyl)glutathione = glutathione + formaldehyde. It participates in one-carbon metabolism; formaldehyde degradation; formate from formaldehyde (glutathione route): step 1/3. Catalyzes the condensation of formaldehyde and glutathione to S-hydroxymethylglutathione. This is Putative glutathione-dependent formaldehyde-activating enzyme from Talaromyces marneffei (strain ATCC 18224 / CBS 334.59 / QM 7333) (Penicillium marneffei).